Here is a 260-residue protein sequence, read N- to C-terminus: Snake venom serine protease homolog 2 (260 aa).

An N-terminal signal peptide occupies residues 1-18 (MVLIRVLANLLVLQLSYA). Residues 19–24 (QKSSEL) constitute a propeptide that is removed on maturation. A Peptidase S1 domain is found at 25–251 (VIGGDECNIN…YTDWIQSIIA (227 aa)). 6 cysteine pairs are disulfide-bonded: cysteine 31–cysteine 165, cysteine 52–cysteine 68, cysteine 100–cysteine 258, cysteine 144–cysteine 212, cysteine 176–cysteine 191, and cysteine 202–cysteine 227. N-linked (GlcNAc...) asparagine glycosylation is present at asparagine 123. Asparagine 253 is a glycosylation site (N-linked (GlcNAc...) asparagine).

Belongs to the peptidase S1 family. Snake venom subfamily. Expressed by the venom gland.

The protein resides in the secreted. Snake venom serine protease homolog that may act in the hemostasis system of the prey. The sequence is that of Snake venom serine protease homolog 2 from Macrovipera lebetinus (Levantine viper).